We begin with the raw amino-acid sequence, 270 residues long: 4-diphosphocytidyl-2-C-methyl-D-erythritol kinase (270 aa).

Residue lysine 8 is part of the active site. Residue 90-100 (PIGAGLGGGSS) coordinates ATP. Aspartate 132 is an active-site residue.

The protein belongs to the GHMP kinase family. IspE subfamily.

The catalysed reaction is 4-CDP-2-C-methyl-D-erythritol + ATP = 4-CDP-2-C-methyl-D-erythritol 2-phosphate + ADP + H(+). Its pathway is isoprenoid biosynthesis; isopentenyl diphosphate biosynthesis via DXP pathway; isopentenyl diphosphate from 1-deoxy-D-xylulose 5-phosphate: step 3/6. In terms of biological role, catalyzes the phosphorylation of the position 2 hydroxy group of 4-diphosphocytidyl-2C-methyl-D-erythritol. This Cytophaga hutchinsonii (strain ATCC 33406 / DSM 1761 / CIP 103989 / NBRC 15051 / NCIMB 9469 / D465) protein is 4-diphosphocytidyl-2-C-methyl-D-erythritol kinase.